A 323-amino-acid chain; its full sequence is MSRNDLSSAPSSSAAPPARILLVTGLSGAGKSTALRTFEDMGWETVDNLPLSLLERLILTPPSSVAAYKGRPLALGIDSRTRGFTVDAFLKGVEQLRQHHSQPIDILFLDCSDSELMRRFDTTRRRHPLALDRPMEDGISEERAFLAPVREIADFLIDTTTTSSHSLQSELRQQFAPENSVAPNVSILSFGFSRGIPRNCDLLFDMRFLQNPYWEEALRPLTGLDPEIADYIEQDPSFLPAVTKIKDLLLFLLPRYIDTGKSYIVIAFACTGGRHRSVYVAEWIAARLRQAHFSLTITHRDLKLPLLESQSNRIRAGKAYQGG.

25-32 contacts ATP; sequence GLSGAGKS. Position 78–81 (78–81) interacts with GTP; that stretch reads DSRT.

It belongs to the RapZ-like family.

Functionally, displays ATPase and GTPase activities. This is Nucleotide-binding protein ZMO1325 from Zymomonas mobilis subsp. mobilis (strain ATCC 31821 / ZM4 / CP4).